Consider the following 218-residue polypeptide: Glycerol-3-phosphate acyltransferase (218 aa).

5 consecutive transmembrane segments (helical) span residues 10-30 (LTLGIAIVGGYLLGSIPFGLI), 60-80 (DLAAITLLGDAGKGVVAVLLA), 88-108 (PAIIALAGGSAFLGHLFPVWL), 125-145 (SAAWPVGVAAGATWLAMAFLF), and 165-185 (AFDQPYPFMGLCLFMAVLIFI).

It belongs to the PlsY family. As to quaternary structure, probably interacts with PlsX.

The protein localises to the cell inner membrane. It carries out the reaction an acyl phosphate + sn-glycerol 3-phosphate = a 1-acyl-sn-glycero-3-phosphate + phosphate. It participates in lipid metabolism; phospholipid metabolism. In terms of biological role, catalyzes the transfer of an acyl group from acyl-phosphate (acyl-PO(4)) to glycerol-3-phosphate (G3P) to form lysophosphatidic acid (LPA). This enzyme utilizes acyl-phosphate as fatty acyl donor, but not acyl-CoA or acyl-ACP. This is Glycerol-3-phosphate acyltransferase from Caulobacter vibrioides (strain ATCC 19089 / CIP 103742 / CB 15) (Caulobacter crescentus).